The primary structure comprises 82 residues: Defensin-like protein 75 (82 aa).

Positions 1–26 are cleaved as a signal peptide; sequence MAKIKSLDVITVAIILLLVIADQATA. Intrachain disulfides connect Cys33–Cys66, Cys37–Cys55, Cys41–Cys64, and Cys45–Cys65.

Belongs to the DEFL family.

The protein resides in the secreted. The polypeptide is Defensin-like protein 75 (LCR45) (Arabidopsis thaliana (Mouse-ear cress)).